Consider the following 149-residue polypeptide: MAFHSLLLLCLAGLVFLSEAGPVAHGAEDSKCPLMVKVLDSVRGSPAVNVDVKVFKKTEEQTWELFASGKTNNNGEIHELTSDDQFGEGLYKVEFDTVSYWKTFGISPFHEYADVVFTANDAGHRHYTIAAQLSPFSFSTTAVVSNPKD.

An N-terminal signal peptide occupies residues 1 to 20; that stretch reads MAFHSLLLLCLAGLVFLSEA. Cysteine 32 is modified (sulfocysteine). Lysine 37 is a binding site for L-thyroxine. 4-carboxyglutamate is present on glutamate 64. L-thyroxine-binding residues include glutamate 76 and serine 139.

The protein belongs to the transthyretin family. In terms of assembly, homotetramer. Dimer of dimers. In the homotetramer, subunits assemble around a central channel that can accommodate two ligand molecules. Interacts with RBP4. In terms of processing, sulfonation of the reactive cysteine Cys-32 enhances the stability of the native conformation of TTR, avoiding misassembly of the protein leading to amyloid formation. As to expression, highly expressed in the choroid plexus.

It is found in the secreted. In terms of biological role, thyroid hormone-binding protein. Probably transports thyroxine from the bloodstream to the brain. The chain is Transthyretin (TTR) from Sminthopsis macroura (Stripe-faced dunnart).